The chain runs to 446 residues: Na(+)-translocating NADH-quinone reductase subunit A (446 aa).

It belongs to the NqrA family. In terms of assembly, composed of six subunits; NqrA, NqrB, NqrC, NqrD, NqrE and NqrF.

The enzyme catalyses a ubiquinone + n Na(+)(in) + NADH + H(+) = a ubiquinol + n Na(+)(out) + NAD(+). NQR complex catalyzes the reduction of ubiquinone-1 to ubiquinol by two successive reactions, coupled with the transport of Na(+) ions from the cytoplasm to the periplasm. NqrA to NqrE are probably involved in the second step, the conversion of ubisemiquinone to ubiquinol. In Vibrio campbellii (strain ATCC BAA-1116), this protein is Na(+)-translocating NADH-quinone reductase subunit A.